We begin with the raw amino-acid sequence, 405 residues long: Protein held out wings (405 aa).

One can recognise a KH domain in the interval 142-210 (YVPVREHPDF…HLSDDLHVLI (69 aa)).

As to quaternary structure, homodimer. Interacts with Sxl; promoting nuclear retention of msl-2 transcripts. As to expression, during embryogenesis, expression is seen in mesodermal precursors of somatic, visceral and pharyngeal muscle. Later in embryogenesis, expression is restricted to heart and muscle attachment sites of the epidermis. During onset of metamorphosis, expression is seen in muscle and muscle attachment cells.

It localises to the nucleus. RNA-binding protein involved in muscle development and dosage compensation. Vital role in steroid regulation of muscle development and to control heart rate. Required during embryogenesis, in late stages of somatic muscle development, for myotube migration and during metamorphosis for muscle reorganization. Required for integrin-mediated cell-adhesion in wing blade. Together with Sxl, acts as an inhibitor of dosage compensation in females by preventing production of msl-2 protein, an essential component of the MSL complex. Specifically binds to the 5'-UTR of msl-2 transcripts and cooperates with Sxl to promote nuclear retention of msl-2 mRNAs. In Drosophila melanogaster (Fruit fly), this protein is Protein held out wings (how).